The primary structure comprises 101 residues: Small ribosomal subunit protein uS10 (101 aa).

Belongs to the universal ribosomal protein uS10 family. Part of the 30S ribosomal subunit.

Its function is as follows. Involved in the binding of tRNA to the ribosomes. The polypeptide is Small ribosomal subunit protein uS10 (Corynebacterium aurimucosum (strain ATCC 700975 / DSM 44827 / CIP 107346 / CN-1) (Corynebacterium nigricans)).